The chain runs to 335 residues: uncharacterized protein (335 aa).

This is an uncharacterized protein from Escherichia coli (strain K12).